Consider the following 135-residue polypeptide: Ribosome-binding factor A (135 aa).

Belongs to the RbfA family. As to quaternary structure, monomer. Binds 30S ribosomal subunits, but not 50S ribosomal subunits or 70S ribosomes.

It localises to the cytoplasm. One of several proteins that assist in the late maturation steps of the functional core of the 30S ribosomal subunit. Associates with free 30S ribosomal subunits (but not with 30S subunits that are part of 70S ribosomes or polysomes). Required for efficient processing of 16S rRNA. May interact with the 5'-terminal helix region of 16S rRNA. In Aliivibrio fischeri (strain ATCC 700601 / ES114) (Vibrio fischeri), this protein is Ribosome-binding factor A.